The following is a 59-amino-acid chain: Cytochrome b-c1 complex subunit 9, mitochondrial (59 aa).

At 1 to 15 (MSALYNLIFRNNTAF) the chain is on the mitochondrial matrix side. Residues 16-41 (VGAVFAGAFAFELAYDNGMDKVWDKI) form a helical membrane-spanning segment. Residues 42–59 (NKGRQWKDIRHKYVEAEE) lie on the Mitochondrial intermembrane side of the membrane.

The protein belongs to the UQCR10/QCR9 family. As to quaternary structure, component of the ubiquinol-cytochrome c oxidoreductase (cytochrome b-c1 complex, complex III, CIII), a multisubunit enzyme composed of 10 subunits. The complex is composed of 3 respiratory subunits cytochrome b (cob), cytochrome c1 (cyt-1) and Rieske protein (fes-1), 2 core protein subunits pep and ucr-1, and 5 low-molecular weight protein subunits qcr6, qcr7, qcr8, qcr9 and probably NCU16844/qcr10. The complex exists as an obligatory dimer and forms supercomplexes (SCs) in the inner mitochondrial membrane with NADH-ubiquinone oxidoreductase (complex I, CI) and cytochrome c oxidase (complex IV, CIV), resulting in different assemblies (supercomplexes SCI(1)III(2), SCIII(2)IV(1) and SCIII(2)IV(2) as well as higher order I(x)III(y)IV(z) megacomplexes).

The protein resides in the mitochondrion inner membrane. Component of the ubiquinol-cytochrome c oxidoreductase, a multisubunit transmembrane complex that is part of the mitochondrial electron transport chain which drives oxidative phosphorylation. The respiratory chain contains 3 multisubunit complexes succinate dehydrogenase (complex II, CII), ubiquinol-cytochrome c oxidoreductase (cytochrome b-c1 complex, complex III, CIII) and cytochrome c oxidase (complex IV, CIV), that cooperate to transfer electrons derived from NADH and succinate to molecular oxygen, creating an electrochemical gradient over the inner membrane that drives transmembrane transport and the ATP synthase. The cytochrome b-c1 complex catalyzes electron transfer from ubiquinol to cytochrome c, linking this redox reaction to translocation of protons across the mitochondrial inner membrane, with protons being carried across the membrane as hydrogens on the quinol. In the process called Q cycle, 2 protons are consumed from the matrix, 4 protons are released into the intermembrane space and 2 electrons are passed to cytochrome c. In Neurospora crassa (strain ATCC 24698 / 74-OR23-1A / CBS 708.71 / DSM 1257 / FGSC 987), this protein is Cytochrome b-c1 complex subunit 9, mitochondrial (qcr9).